The primary structure comprises 257 residues: UPF0246 protein VCM66_2278 (257 aa).

It belongs to the UPF0246 family.

The sequence is that of UPF0246 protein VCM66_2278 from Vibrio cholerae serotype O1 (strain M66-2).